A 425-amino-acid polypeptide reads, in one-letter code: DNA replication and repair protein RecF (425 aa).

Gly30 to Thr37 is a binding site for ATP.

This sequence belongs to the RecF family.

The protein localises to the cytoplasm. In terms of biological role, the RecF protein is involved in DNA metabolism; it is required for DNA replication and normal SOS inducibility. RecF binds preferentially to single-stranded, linear DNA. It also seems to bind ATP. This Corynebacterium jeikeium (strain K411) protein is DNA replication and repair protein RecF.